A 548-amino-acid chain; its full sequence is MKKRWNSVFKLVLMVTAILGLSLYVTTSQGVEVRAESITQPTAINVIFPDPALANAIKIAAGKSNVTDTVTQADLDGITTLSAFGTGVTTIEGVQYLNNLIGLELKDNQITDLTPLKNLTKITELELSGNPLKNVSAIAGLQSIKTLDLTSTQITDVTPLAGLSNLQVLYLDLNQITNISPLAGLTNLQYLSIGNAQVSDLTPLANLSKLTTLKADDNKISDISPLASLPNLIEVHLKNNQISDVSPLANTSNLFIVTLTNQTITNQPVFYQNNLVVPNVVKGPSGAPIAPATISDNGTYASPNLTWNLTSFINNVSYTFNQSVTFKNTTVPFSGTVTQPLTEAYTAVFDVDGKQTSVTVGANELIKEPTAPTKEGYTFTGWYDAKTGGTKWDFATDKMPAEDITLYAQFTINSYTATFDIDGKLTTQKVTYQSLLEEPVAPTKDGYTFTGWYDAKTGGTKWDFATGKMPAGNITLYAQFTKNDNPNPDDPTTNTPTGNGDGTSNPSNSGGNTTLPTAGDENTMLPIFIGVFLLGTATLILRKTIKVK.

Positions 1–30 are cleaved as a signal peptide; sequence MKKRWNSVFKLVLMVTAILGLSLYVTTSQG. LRR repeat units follow at residues 93–105, 113–127, 135–149, 157–171, 179–193, 201–215, and 223–236; these read GVQY…GLEL, LTPL…ELEL, VSAI…TLDL, VTPL…VLYL, ISPL…YLSI, LTPL…TLKA, and ISPL…IEVH. Residues 480–518 form a disordered region; the sequence is FTKNDNPNPDDPTTNTPTGNGDGTSNPSNSGGNTTLPTA. Over residues 483-498 the composition is skewed to low complexity; sequence NDNPNPDDPTTNTPTG. Polar residues predominate over residues 504–516; the sequence is SNPSNSGGNTTLP. The short motif at 515–519 is the LPXTG sorting signal element; that stretch reads LPTAG. A518 is subject to Pentaglycyl murein peptidoglycan amidated alanine. A propeptide spans 519-548 (removed by sortase A); sequence GDENTMLPIFIGVFLLGTATLILRKTIKVK.

Belongs to the internalin family.

The protein localises to the secreted. Its subcellular location is the cell wall. Functionally, contributes to systemic listeriosis in mice by decreasing host IL-6 cytokine production and thus evasion of the host immune response. Does not contribute to invasion of the host intestinal tissue. The chain is Internalin H (inlH) from Listeria monocytogenes serovar 1/2a (strain ATCC BAA-679 / EGD-e).